The chain runs to 353 residues: UDP-N-acetylglucosamine--N-acetylmuramyl-(pentapeptide) pyrophosphoryl-undecaprenol N-acetylglucosamine transferase (353 aa).

Residues 10-12 (TGG), N124, S183, and Q283 each bind UDP-N-acetyl-alpha-D-glucosamine.

Belongs to the glycosyltransferase 28 family. MurG subfamily.

The protein localises to the cell inner membrane. The catalysed reaction is di-trans,octa-cis-undecaprenyl diphospho-N-acetyl-alpha-D-muramoyl-L-alanyl-D-glutamyl-meso-2,6-diaminopimeloyl-D-alanyl-D-alanine + UDP-N-acetyl-alpha-D-glucosamine = di-trans,octa-cis-undecaprenyl diphospho-[N-acetyl-alpha-D-glucosaminyl-(1-&gt;4)]-N-acetyl-alpha-D-muramoyl-L-alanyl-D-glutamyl-meso-2,6-diaminopimeloyl-D-alanyl-D-alanine + UDP + H(+). Its pathway is cell wall biogenesis; peptidoglycan biosynthesis. Functionally, cell wall formation. Catalyzes the transfer of a GlcNAc subunit on undecaprenyl-pyrophosphoryl-MurNAc-pentapeptide (lipid intermediate I) to form undecaprenyl-pyrophosphoryl-MurNAc-(pentapeptide)GlcNAc (lipid intermediate II). The polypeptide is UDP-N-acetylglucosamine--N-acetylmuramyl-(pentapeptide) pyrophosphoryl-undecaprenol N-acetylglucosamine transferase (Helicobacter pylori (strain G27)).